Reading from the N-terminus, the 546-residue chain is Putative serine/threonine-protein kinase L268 (546 aa).

The region spanning 1–112 is the Cyclin N-terminal domain; it reads MVCFSKYSGI…ILQTLDFHLV (112 aa). In terms of domain architecture, Protein kinase spans 260–544; it reads ITVVKNLGEG…QTLEEFNKFN (285 aa). Residues 266–274 and lysine 287 contribute to the ATP site; that span reads LGEGTYGTV. Aspartate 389 acts as the Proton acceptor in catalysis.

It belongs to the protein kinase superfamily. Ser/Thr protein kinase family.

The enzyme catalyses L-seryl-[protein] + ATP = O-phospho-L-seryl-[protein] + ADP + H(+). It carries out the reaction L-threonyl-[protein] + ATP = O-phospho-L-threonyl-[protein] + ADP + H(+). In Acanthamoeba polyphaga mimivirus (APMV), this protein is Putative serine/threonine-protein kinase L268.